The sequence spans 423 residues: Adenosylmethionine-8-amino-7-oxononanoate aminotransferase (423 aa).

Tryptophan 51 provides a ligand contact to substrate. 111–112 (GS) serves as a coordination point for pyridoxal 5'-phosphate. Residue tyrosine 144 coordinates substrate. Aspartate 243 lines the pyridoxal 5'-phosphate pocket. Lysine 272 and glycine 306 together coordinate substrate. At lysine 272 the chain carries N6-(pyridoxal phosphate)lysine. A pyridoxal 5'-phosphate-binding site is contributed by 307–308 (PT). Residue arginine 390 participates in substrate binding.

This sequence belongs to the class-III pyridoxal-phosphate-dependent aminotransferase family. BioA subfamily. In terms of assembly, homodimer. Requires pyridoxal 5'-phosphate as cofactor.

The protein localises to the cytoplasm. It carries out the reaction (8S)-8-amino-7-oxononanoate + S-adenosyl-L-methionine = S-adenosyl-4-methylsulfanyl-2-oxobutanoate + (7R,8S)-7,8-diammoniononanoate. The protein operates within cofactor biosynthesis; biotin biosynthesis; 7,8-diaminononanoate from 8-amino-7-oxononanoate (SAM route): step 1/1. Functionally, catalyzes the transfer of the alpha-amino group from S-adenosyl-L-methionine (SAM) to 7-keto-8-aminopelargonic acid (KAPA) to form 7,8-diaminopelargonic acid (DAPA). It is the only aminotransferase known to utilize SAM as an amino donor. The protein is Adenosylmethionine-8-amino-7-oxononanoate aminotransferase of Corynebacterium glutamicum (strain ATCC 13032 / DSM 20300 / JCM 1318 / BCRC 11384 / CCUG 27702 / LMG 3730 / NBRC 12168 / NCIMB 10025 / NRRL B-2784 / 534).